The chain runs to 365 residues: Peptide chain release factor 2 (365 aa).

N5-methylglutamine is present on Gln251.

Belongs to the prokaryotic/mitochondrial release factor family. Methylated by PrmC. Methylation increases the termination efficiency of RF2.

It is found in the cytoplasm. Peptide chain release factor 2 directs the termination of translation in response to the peptide chain termination codons UGA and UAA. In Campylobacter jejuni subsp. jejuni serotype O:2 (strain ATCC 700819 / NCTC 11168), this protein is Peptide chain release factor 2.